Consider the following 357-residue polypeptide: Probable cinnamyl alcohol dehydrogenase 7/8 (357 aa).

C47 lines the Zn(2+) pocket. NADP(+) is bound at residue S49. Residues H69, E70, C100, C103, C106, C114, and C163 each coordinate Zn(2+). Residues T167, 188–193, 211–216, T251, G275, and 298–300 contribute to the NADP(+) site; these read GLGGVG, SSSDKK, and SFI.

It belongs to the zinc-containing alcohol dehydrogenase family. As to quaternary structure, homodimer. Zn(2+) serves as cofactor.

The catalysed reaction is (E)-cinnamyl alcohol + NADP(+) = (E)-cinnamaldehyde + NADPH + H(+). It carries out the reaction (E)-coniferol + NADP(+) = (E)-coniferaldehyde + NADPH + H(+). The enzyme catalyses (E)-sinapyl alcohol + NADP(+) = (E)-sinapaldehyde + NADPH + H(+). It catalyses the reaction (E)-4-coumaroyl alcohol + NADP(+) = (E)-4-coumaraldehyde + NADPH + H(+). The catalysed reaction is (E)-caffeyl alcohol + NADP(+) = (E)-caffeyl aldehyde + NADPH + H(+). It functions in the pathway aromatic compound metabolism; phenylpropanoid biosynthesis. In terms of biological role, involved in lignin biosynthesis. Catalyzes the final step specific for the production of lignin monomers. Catalyzes the NADPH-dependent reduction of coniferaldehyde, 5-hydroxyconiferaldehyde, sinapaldehyde, 4-coumaraldehyde and caffeyl aldehyde to their respective alcohols. This is Probable cinnamyl alcohol dehydrogenase 7/8 (CAD7) from Picea abies (Norway spruce).